The primary structure comprises 541 residues: Formimidoyltransferase-cyclodeaminase (541 aa).

A formiminotransferase N-subdomain region spans residues 1–181 (MSQLVECVPN…GATVTGARKF (181 aa)). The For formimidoyltransferase activity role is filled by H82. 163-172 (GPSSFVPSWG) is a binding site for folate. Residues 182 to 326 (LIAFNINLLS…PKERIIEYLV (145 aa)) form a formiminotransferase C-subdomain region. Residues 327–334 (PDSGPEQS) are linker. The tract at residues 335-541 (LLDASLRAFV…VLGSLEARKE (207 aa)) is cyclodeaminase/cyclohydrolase. The active-site For cyclodeaminase activity is D412. At S520 the chain carries Phosphoserine.

This sequence in the C-terminal section; belongs to the cyclodeaminase/cyclohydrolase family. It in the N-terminal section; belongs to the formiminotransferase family. In terms of assembly, homooctamer, including four polyglutamate binding sites. The subunits are arranged as a tetramer of dimers, and form a planar ring-shaped structure. In terms of tissue distribution, specifically expressed in liver (at protein level).

It localises to the cytoplasm. Its subcellular location is the cytosol. The protein resides in the golgi apparatus. The protein localises to the cytoskeleton. It is found in the microtubule organizing center. It localises to the centrosome. Its subcellular location is the centriole. It catalyses the reaction 5-formimidoyltetrahydrofolate + L-glutamate = N-formimidoyl-L-glutamate + (6S)-5,6,7,8-tetrahydrofolate. It carries out the reaction 5-formimidoyltetrahydrofolate + 2 H(+) = (6R)-5,10-methenyltetrahydrofolate + NH4(+). The protein operates within amino-acid degradation; L-histidine degradation into L-glutamate; L-glutamate from N-formimidoyl-L-glutamate (transferase route): step 1/1. Folate-dependent enzyme, that displays both transferase and deaminase activity. Serves to channel one-carbon units from formiminoglutamate to the folate pool. Functionally, binds and promotes bundling of vimentin filaments originating from the Golgi. The chain is Formimidoyltransferase-cyclodeaminase (Ftcd) from Rattus norvegicus (Rat).